Consider the following 85-residue polypeptide: uncharacterized protein (85 aa).

Positions 1-21 (MRPLLCALAGLALLCAVGALA) are cleaved as a signal peptide. Residues 22–35 (DGREDRGSPGDTGE) show a composition bias toward basic and acidic residues. The segment at 22-85 (DGREDRGSPG…EVVHLPGSTL (64 aa)) is disordered. A compositionally biased stretch (low complexity) spans 36–51 (RPAGPARGPGLEPARG).

The protein resides in the secreted. This is an uncharacterized protein from Homo sapiens (Human).